The primary structure comprises 407 residues: Bifunctional enzyme IspD/IspF (407 aa).

A 2-C-methyl-D-erythritol 4-phosphate cytidylyltransferase region spans residues M1–V247. The interval R248–Q407 is 2-C-methyl-D-erythritol 2,4-cyclodiphosphate synthase. D254 and H256 together coordinate a divalent metal cation. 4-CDP-2-C-methyl-D-erythritol 2-phosphate-binding positions include D254 to H256 and H280 to S281. H288 provides a ligand contact to a divalent metal cation. 4-CDP-2-C-methyl-D-erythritol 2-phosphate-binding positions include D302–G304, T378–E381, F385, and R388.

This sequence in the N-terminal section; belongs to the IspD/TarI cytidylyltransferase family. IspD subfamily. The protein in the C-terminal section; belongs to the IspF family. Requires a divalent metal cation as cofactor.

It carries out the reaction 2-C-methyl-D-erythritol 4-phosphate + CTP + H(+) = 4-CDP-2-C-methyl-D-erythritol + diphosphate. The catalysed reaction is 4-CDP-2-C-methyl-D-erythritol 2-phosphate = 2-C-methyl-D-erythritol 2,4-cyclic diphosphate + CMP. It participates in isoprenoid biosynthesis; isopentenyl diphosphate biosynthesis via DXP pathway; isopentenyl diphosphate from 1-deoxy-D-xylulose 5-phosphate: step 2/6. The protein operates within isoprenoid biosynthesis; isopentenyl diphosphate biosynthesis via DXP pathway; isopentenyl diphosphate from 1-deoxy-D-xylulose 5-phosphate: step 4/6. In terms of biological role, bifunctional enzyme that catalyzes the formation of 4-diphosphocytidyl-2-C-methyl-D-erythritol from CTP and 2-C-methyl-D-erythritol 4-phosphate (MEP) (IspD), and catalyzes the conversion of 4-diphosphocytidyl-2-C-methyl-D-erythritol 2-phosphate (CDP-ME2P) to 2-C-methyl-D-erythritol 2,4-cyclodiphosphate (ME-CPP) with a corresponding release of cytidine 5-monophosphate (CMP) (IspF). This chain is Bifunctional enzyme IspD/IspF, found in Allorhizobium ampelinum (strain ATCC BAA-846 / DSM 112012 / S4) (Agrobacterium vitis (strain S4)).